The following is a 351-amino-acid chain: Hepatocyte nuclear factor 3-gamma (351 aa).

Pro residues predominate over residues 52–73; sequence PGGLPASPLPTGPLAPPAPTAP. Residues 52–94 form a disordered region; sequence PGGLPASPLPTGPLAPPAPTAPLGPTFPGLGASTGGGSSSGYG. Residues 83–94 are compositionally biased toward gly residues; sequence ASTGGGSSSGYG. The segment at residues 118 to 212 is a DNA-binding region (fork-head); sequence KPPYSYISLI…ENGCYLRRQK (95 aa). Residues 218–275 form a disordered region; it reads EKVKKGGGGSSASRNSAGSASTATAPAATVASTPQPQPPPPEPEAQGGDEVGALDCGS. Low complexity predominate over residues 228 to 251; the sequence is SASRNSAGSASTATAPAATVASTP.

The protein resides in the nucleus. Transcription activator for a number of liver genes such as AFP, albumin, tyrosine aminotransferase, PEPCK, etc. Interacts with the cis-acting regulatory regions of these genes. This is Hepatocyte nuclear factor 3-gamma (FOXA3) from Bos taurus (Bovine).